A 302-amino-acid chain; its full sequence is Sulfate adenylyltransferase subunit 2 2 (302 aa).

It belongs to the PAPS reductase family. CysD subfamily. In terms of assembly, heterodimer composed of CysD, the smaller subunit, and CysN.

The enzyme catalyses sulfate + ATP + H(+) = adenosine 5'-phosphosulfate + diphosphate. It participates in sulfur metabolism; hydrogen sulfide biosynthesis; sulfite from sulfate: step 1/3. Functionally, with CysN forms the ATP sulfurylase (ATPS) that catalyzes the adenylation of sulfate producing adenosine 5'-phosphosulfate (APS) and diphosphate, the first enzymatic step in sulfur assimilation pathway. APS synthesis involves the formation of a high-energy phosphoric-sulfuric acid anhydride bond driven by GTP hydrolysis by CysN coupled to ATP hydrolysis by CysD. The sequence is that of Sulfate adenylyltransferase subunit 2 2 from Alkalilimnicola ehrlichii (strain ATCC BAA-1101 / DSM 17681 / MLHE-1).